Here is a 421-residue protein sequence, read N- to C-terminus: 3-alpha-mycarosylerythronolide B desosaminyl transferase (421 aa).

Residues Met1–Ala23 form the signal peptide.

The protein belongs to the glycosyltransferase 28 family. As to quaternary structure, heterotetramer composed of EryCII and EryCIII.

It catalyses the reaction 3-O-alpha-L-mycarosylerythronolide B + dTDP-alpha-D-desosamine = erythromycin D + dTDP + H(+). It participates in antibiotic biosynthesis; erythromycin biosynthesis. Catalyzes the conversion of alpha-L-mycarosylerythronolide B into erythromycin D in the erythromycin biosynthesis pathway. The polypeptide is 3-alpha-mycarosylerythronolide B desosaminyl transferase (eryCIII) (Saccharopolyspora erythraea (strain ATCC 11635 / DSM 40517 / JCM 4748 / NBRC 13426 / NCIMB 8594 / NRRL 2338)).